A 549-amino-acid polypeptide reads, in one-letter code: FERM domain-containing protein 1 (549 aa).

The tract at residues 1 to 40 (MAVPPRGRGIDPARTNPDTFPPSGARCMEPSPERPACSQQ) is disordered. The 316-residue stretch at 54 to 369 (RDVLVLLPSR…DELELDLASR (316 aa)) folds into the FERM domain. Disordered stretches follow at residues 377-400 (SSQH…YTSG) and 422-464 (HGLH…GQSA). Residues 430-443 (SSSPRTSRSHPSTR) show a composition bias toward low complexity. Residues 444 to 462 (GDSQATRQEPCTQVRTRGQ) show a composition bias toward polar residues.

The polypeptide is FERM domain-containing protein 1 (FRMD1) (Homo sapiens (Human)).